A 363-amino-acid polypeptide reads, in one-letter code: 3-dehydroquinate synthase (363 aa).

NAD(+) contacts are provided by residues 75-80 (DAEEGK), 109-113 (GAVTD), 133-134 (TS), Lys146, Lys155, and 173-176 (TLQT). Positions 188, 251, and 267 each coordinate Zn(2+).

Belongs to the sugar phosphate cyclases superfamily. Dehydroquinate synthase family. Requires Co(2+) as cofactor. Zn(2+) is required as a cofactor. NAD(+) serves as cofactor.

The protein localises to the cytoplasm. It catalyses the reaction 7-phospho-2-dehydro-3-deoxy-D-arabino-heptonate = 3-dehydroquinate + phosphate. It participates in metabolic intermediate biosynthesis; chorismate biosynthesis; chorismate from D-erythrose 4-phosphate and phosphoenolpyruvate: step 2/7. Functionally, catalyzes the conversion of 3-deoxy-D-arabino-heptulosonate 7-phosphate (DAHP) to dehydroquinate (DHQ). In Paenarthrobacter aurescens (strain TC1), this protein is 3-dehydroquinate synthase.